Reading from the N-terminus, the 101-residue chain is uncharacterized protein (101 aa).

The helical transmembrane segment at 77-99 threads the bilayer; the sequence is VFSFMNGFTDGCICGTIIILCLI.

It localises to the membrane. This is an uncharacterized protein from Acanthamoeba polyphaga mimivirus (APMV).